The chain runs to 635 residues: Cationic amino acid transporter 2, vacuolar (635 aa).

At 1-48 the chain is on the cytoplasmic side; sequence MGFLVDTQKEGGGHSWGYVRSLVRRKQVDSANGQSHGHQLARALTVPH. Residues 49–69 traverse the membrane as a helical segment; it reads LVAIGVGATIGAGVYILVGTV. The Vacuolar segment spans residues 70-76; the sequence is AREHSGP. A helical membrane pass occupies residues 77–97; the sequence is SLALSFLIAGIAAGLSAFCYA. Residues 98–108 lie on the Cytoplasmic side of the membrane; it reads ELSSRCPSAGS. The helical transmembrane segment at 109–131 threads the bilayer; it reads AYHYSYICVGEGVAWIIGWALIL. At 132-171 the chain is on the vacuolar side; it reads EYTIGGSAVARGISPNLALIFGGEDGLPAILARHQIPGLD. Residues 172–192 traverse the membrane as a helical segment; that stretch reads IVVDPCAAILVFVVTGLLCMG. Residues 193–200 lie on the Cytoplasmic side of the membrane; sequence IKESTFAQ. Residues 201–221 form a helical membrane-spanning segment; that stretch reads GIVTAVNVCVLLFVIVAGSYL. The Vacuolar portion of the chain corresponds to 222 to 235; it reads GFKTGWPGYELPTG. A helical membrane pass occupies residues 236-256; that stretch reads FFPFGVDGMFAGSATVFFAFI. Residues 257–280 lie on the Cytoplasmic side of the membrane; it reads GFDSVASTAEEVRNPQRDLPIGIG. A helical transmembrane segment spans residues 281 to 301; that stretch reads LALLLCCSLYMMVSIVIVGLI. Residues 302–324 lie on the Vacuolar side of the membrane; that stretch reads PYYAMDPDTPISSAFASHDMQWA. The helical transmembrane segment at 325–345 threads the bilayer; it reads VYLITLGAVMALCSALMGALL. The Cytoplasmic segment spans residues 346–376; that stretch reads PQPRILMAMARDGLLPSIFSDINKRTQVPVK. A helical transmembrane segment spans residues 377–397; it reads ATVATGLCAATLAFFMDVSQL. Position 398 (Ala-398) is a topological domain, vacuolar. Residues 399 to 419 traverse the membrane as a helical segment; that stretch reads GMVSVGTLLAFTMVAISVLIL. Residues 420-493 are Cytoplasmic-facing; that stretch reads RYVPPDEQPL…CLVLSEETRR (74 aa). A helical membrane pass occupies residues 494–514; sequence IVAGWSIMFTCVGAFLLSYAA. The Vacuolar portion of the chain corresponds to 515 to 524; the sequence is SSLSFPGLIR. The chain crosses the membrane as a helical span at residues 525–545; that stretch reads YPLCGVGGCLLLAGLIALSSI. The Cytoplasmic segment spans residues 546–560; the sequence is DQDDARHTFGHSGGY. Residues 561-581 form a helical membrane-spanning segment; that stretch reads MCPFVPLLPIICILINMYLLV. Residues 582-585 lie on the Vacuolar side of the membrane; it reads NLGS. Residues 586-606 form a helical membrane-spanning segment; that stretch reads ATWARVSVWLLIGVIVYVFYG. Over 607 to 635 the chain is Cytoplasmic; that stretch reads RKNSSLANAVYVTTAHAEEIYREHEGSLA.

It belongs to the amino acid-polyamine-organocation (APC) superfamily. Cationic amino acid transporter (CAT) (TC 2.A.3.3) family. In terms of tissue distribution, expressed in roots, stems, flowers, leaves, and siliques.

The protein localises to the vacuole membrane. In terms of biological role, permease involved in the transport of the cationic amino acids. In Arabidopsis thaliana (Mouse-ear cress), this protein is Cationic amino acid transporter 2, vacuolar (CAT2).